A 352-amino-acid polypeptide reads, in one-letter code: tRNA N6-adenosine threonylcarbamoyltransferase (352 aa).

Positions 115 and 119 each coordinate Fe cation. Residues 137–141 (LVSGG), Asp170, Gly183, and Asn281 contribute to the substrate site. Asp309 contributes to the Fe cation binding site.

The protein belongs to the KAE1 / TsaD family. Requires Fe(2+) as cofactor.

It is found in the cytoplasm. It carries out the reaction L-threonylcarbamoyladenylate + adenosine(37) in tRNA = N(6)-L-threonylcarbamoyladenosine(37) in tRNA + AMP + H(+). In terms of biological role, required for the formation of a threonylcarbamoyl group on adenosine at position 37 (t(6)A37) in tRNAs that read codons beginning with adenine. Is involved in the transfer of the threonylcarbamoyl moiety of threonylcarbamoyl-AMP (TC-AMP) to the N6 group of A37, together with TsaE and TsaB. TsaD likely plays a direct catalytic role in this reaction. The polypeptide is tRNA N6-adenosine threonylcarbamoyltransferase (Methylocapsa acidiphila).